The primary structure comprises 206 residues: Imidazole glycerol phosphate synthase subunit HisH (206 aa).

Positions 5–206 (SVVVLDYGSG…AVLRNWIERL (202 aa)) constitute a Glutamine amidotransferase type-1 domain. Catalysis depends on Cys83, which acts as the Nucleophile. Active-site residues include His187 and Glu189.

In terms of assembly, heterodimer of HisH and HisF.

The protein resides in the cytoplasm. The enzyme catalyses 5-[(5-phospho-1-deoxy-D-ribulos-1-ylimino)methylamino]-1-(5-phospho-beta-D-ribosyl)imidazole-4-carboxamide + L-glutamine = D-erythro-1-(imidazol-4-yl)glycerol 3-phosphate + 5-amino-1-(5-phospho-beta-D-ribosyl)imidazole-4-carboxamide + L-glutamate + H(+). It catalyses the reaction L-glutamine + H2O = L-glutamate + NH4(+). It functions in the pathway amino-acid biosynthesis; L-histidine biosynthesis; L-histidine from 5-phospho-alpha-D-ribose 1-diphosphate: step 5/9. Its function is as follows. IGPS catalyzes the conversion of PRFAR and glutamine to IGP, AICAR and glutamate. The HisH subunit catalyzes the hydrolysis of glutamine to glutamate and ammonia as part of the synthesis of IGP and AICAR. The resulting ammonia molecule is channeled to the active site of HisF. The sequence is that of Imidazole glycerol phosphate synthase subunit HisH from Mycolicibacterium paratuberculosis (strain ATCC BAA-968 / K-10) (Mycobacterium paratuberculosis).